The following is a 734-amino-acid chain: Photosystem I P700 chlorophyll a apoprotein A2 (734 aa).

8 helical membrane-spanning segments follow: residues Ile46–Ala69, Leu135–Gln158, Leu175–Ile199, Met273–Tyr291, Ile330–Tyr353, Ala369–Ile395, Ala417–His439, and Phe517–Val535. The [4Fe-4S] cluster site is built by Cys559 and Cys568. The next 2 helical transmembrane spans lie at Ala575–Trp596 and Leu643–Ile665. Chlorophyll a-binding residues include His654, Met662, and Tyr670. Trp671 contributes to the phylloquinone binding site. Residues Leu707–Ala727 traverse the membrane as a helical segment.

It belongs to the PsaA/PsaB family. As to quaternary structure, the PsaA/B heterodimer binds the P700 chlorophyll special pair and subsequent electron acceptors. PSI consists of a core antenna complex that captures photons, and an electron transfer chain that converts photonic excitation into a charge separation. The eukaryotic PSI reaction center is composed of at least 11 subunits. The cofactor is P700 is a chlorophyll a/chlorophyll a' dimer, A0 is one or more chlorophyll a, A1 is one or both phylloquinones and FX is a shared 4Fe-4S iron-sulfur center..

Its subcellular location is the plastid. The protein resides in the chloroplast thylakoid membrane. It catalyses the reaction reduced [plastocyanin] + hnu + oxidized [2Fe-2S]-[ferredoxin] = oxidized [plastocyanin] + reduced [2Fe-2S]-[ferredoxin]. Functionally, psaA and PsaB bind P700, the primary electron donor of photosystem I (PSI), as well as the electron acceptors A0, A1 and FX. PSI is a plastocyanin-ferredoxin oxidoreductase, converting photonic excitation into a charge separation, which transfers an electron from the donor P700 chlorophyll pair to the spectroscopically characterized acceptors A0, A1, FX, FA and FB in turn. Oxidized P700 is reduced on the lumenal side of the thylakoid membrane by plastocyanin. The protein is Photosystem I P700 chlorophyll a apoprotein A2 of Arabidopsis thaliana (Mouse-ear cress).